Consider the following 766-residue polypeptide: MGQKRQRGSKSADLQAKKRKKDVSAVEDGEDALVTVNDLNWKEVALPDRLEDAGGFFGLEEIDGVEVIKGGSEGLRFKAAHGKPKKSILKKKAPEEEEPKFDDDEWSGFSDNEVTEKKDTAPKEDQKDEQEADKPTAEEKKKAKKDRQAEQKKAKKEAKQKTTPNQEDKSIKPGLSFAALQDEEDDDGVDVSAWESLGLSPEILTSLSKMKFTTPTLVQKSCIPQILDGHDVIGKASTGSGKTLAFGIPILEHYLEKRRQDLRAGKEEKKKDTAPIALIMSPTRELAHQLAKHIGELALHAPGSNARIALLTGGLSVQKQQRVLAGADIVIGTPGRVWEVLSSGQGLIRKMSEIKFLVIDEADRLLSEGHFKEAEEILGALDRVEEGNFGGEESEDEEKEDARSERQTLVFSATFHRDLQQKLAGKARWTGGDIMSNKESMEYLLQKLKFREEKPKFIDVNPVSQMAEGLKEGIVECGAMEKDLYLYTLLLYNPKHRTLVFTNSISAVRRLTQLLQNLGLPALALHSSMAQKARLRSVERFSSPTSDPSSILVATDVAARGLDIKGIDFVIHYHAPRAADTYVHRSGRTARAGASGKSVIICAPEEMVGVVRLAAKVHANMANGKKLPLESLELDRRVVLRVRQRVDLAAKITDSNIAKEKISAEDNWLQKAAEDLGVEYDSEEFESAQGRGRGRGRGRQERQRKAGEVTKNELAAMRAELKHLLSQRVNVGVSERYLTSGRVDIEALLRGEGNNSFLGQVDPLDF.

2 disordered regions span residues 1 to 28 (MGQK…AVED) and 75 to 173 (LRFK…SIKP). Over residues 78 to 91 (KAAHGKPKKSILKK) the composition is skewed to basic residues. Residues 95 to 106 (EEEEPKFDDDEW) show a composition bias toward acidic residues. Composition is skewed to basic and acidic residues over residues 114–126 (VTEK…KEDQ) and 132–171 (ADKP…DKSI). The Q motif signature appears at 192-220 (SAWESLGLSPEILTSLSKMKFTTPTLVQK). In terms of domain architecture, Helicase ATP-binding spans 223-433 (IPQILDGHDV…AGKARWTGGD (211 aa)). Position 236 to 243 (236 to 243 (ASTGSGKT)) interacts with ATP. A DEAD box motif is present at residues 360 to 363 (DEAD). The 151-residue stretch at 485–635 (YLYTLLLYNP…KLPLESLELD (151 aa)) folds into the Helicase C-terminal domain. The disordered stretch occupies residues 683–711 (EEFESAQGRGRGRGRGRQERQRKAGEVTK). The segment covering 698–711 (GRQERQRKAGEVTK) has biased composition (basic and acidic residues).

It belongs to the DEAD box helicase family. DDX24/MAK5 subfamily.

It localises to the nucleus. The protein resides in the nucleolus. The enzyme catalyses ATP + H2O = ADP + phosphate + H(+). ATP-binding RNA helicase involved in the biogenesis of 60S ribosomal subunits and is required for the normal formation of 25S and 5.8S rRNAs. The chain is ATP-dependent RNA helicase mak5 (mak5) from Aspergillus niger (strain ATCC MYA-4892 / CBS 513.88 / FGSC A1513).